A 426-amino-acid chain; its full sequence is Phosphoribosylamine--glycine ligase (426 aa).

The 208-residue stretch at 113 to 320 (KSLMTEAKIP…LLELLYRAST (208 aa)) folds into the ATP-grasp domain. An ATP-binding site is contributed by 139–200 (LESKSIPIVI…EEFMEGQEAS (62 aa)). Mg(2+) contacts are provided by Glu-290 and Asn-292.

It belongs to the GARS family. The cofactor is Mg(2+). Requires Mn(2+) as cofactor.

It catalyses the reaction 5-phospho-beta-D-ribosylamine + glycine + ATP = N(1)-(5-phospho-beta-D-ribosyl)glycinamide + ADP + phosphate + H(+). The protein operates within purine metabolism; IMP biosynthesis via de novo pathway; N(1)-(5-phospho-D-ribosyl)glycinamide from 5-phospho-alpha-D-ribose 1-diphosphate: step 2/2. This is Phosphoribosylamine--glycine ligase from Leptospira interrogans serogroup Icterohaemorrhagiae serovar Lai (strain 56601).